Consider the following 517-residue polypeptide: Zinc finger protein 215 (517 aa).

The SCAN box domain occupies 48–126; that stretch reads RQKFRHFQYL…KDMVTLIEDV (79 aa). The region spanning 164–237 is the KRAB domain; sequence VTFKDVVVEF…EKEIPRKTIF (74 aa). C2H2-type zinc fingers lie at residues 379–401, 407–429, 462–484, and 490–512; these read YECYQCGKAFCRSSSLIRHQIIH, YKCSECGRFFNRRTNLTKHQKLH, YQCVNCGKSFNRSSSLIRHQMIH, and FKCKECSKAFNRSSNLVKHQKLH.

This sequence belongs to the krueppel C2H2-type zinc-finger protein family.

The protein resides in the nucleus. In terms of biological role, may be involved in transcriptional regulation. This is Zinc finger protein 215 (ZNF215) from Homo sapiens (Human).